A 178-amino-acid polypeptide reads, in one-letter code: Ribosome maturation factor RimM (178 aa).

Positions aspartate 100–phenylalanine 178 constitute a PRC barrel domain.

Belongs to the RimM family. In terms of assembly, binds ribosomal protein uS19.

The protein localises to the cytoplasm. Its function is as follows. An accessory protein needed during the final step in the assembly of 30S ribosomal subunit, possibly for assembly of the head region. Essential for efficient processing of 16S rRNA. May be needed both before and after RbfA during the maturation of 16S rRNA. It has affinity for free ribosomal 30S subunits but not for 70S ribosomes. This Azotobacter vinelandii (strain DJ / ATCC BAA-1303) protein is Ribosome maturation factor RimM.